A 538-amino-acid chain; its full sequence is Cytochrome P450 monooxygenase claM (538 aa).

A helical transmembrane segment spans residues 36–56 (LSIGLVVLIGAISSFLLQQFL). 2 N-linked (GlcNAc...) asparagine glycosylation sites follow: Asn306 and Asn425. Cys472 is a binding site for heme.

The protein belongs to the cytochrome P450 family. Heme is required as a cofactor.

Its subcellular location is the membrane. It catalyses the reaction 2 nataloe emodin + reduced [NADPH--hemoprotein reductase] + O2 = cladofulvin + oxidized [NADPH--hemoprotein reductase] + 2 H2O + H(+). It participates in pigment biosynthesis. Functionally, cytochrome P450 monooxygenase; part of the gene cluster that mediates the biosynthesis of the bianthraquinone cladofulvin, a conidial pigment not required for virulence but that plays a role in fitness and resistance to environmental stresses including UV light and low-temperature stress. The pathway begins with the synthesis of atrochrysone thioester by the polyketide synthase (PKS) claG. The atrochrysone carboxyl ACP thioesterase claF then breaks the thioester bond and releases the atrochrysone carboxylic acid from claG. This compound is decarboxylated by claH to yield emodin, which is further converted to chrysophanol hydroquinone by the reductase claC and the dehydratase claB. The cytochrome monooxygenase P450 claM then catalyzes the dimerization of nataloe-emodin to cladofulvin. The polypeptide is Cytochrome P450 monooxygenase claM (Passalora fulva (Tomato leaf mold)).